We begin with the raw amino-acid sequence, 250 residues long: Large ribosomal subunit protein uL13c (250 aa).

The N-terminal 47 residues, 1–47 (MATMACASSLTFPSAQTQKSFFGTNVKQTPVLSFPRPTVAAAVAVSA), are a transit peptide targeting the chloroplast.

As to quaternary structure, component of the chloroplast large ribosomal subunit (LSU). Mature 70S chloroplast ribosomes of higher plants consist of a small (30S) and a large (50S) subunit. The 30S small subunit contains 1 molecule of ribosomal RNA (16S rRNA) and 24 different proteins. The 50S large subunit contains 3 rRNA molecules (23S, 5S and 4.5S rRNA) and 33 different proteins.

The protein resides in the plastid. It is found in the chloroplast. Its function is as follows. Component of the chloroplast ribosome (chloro-ribosome), a dedicated translation machinery responsible for the synthesis of chloroplast genome-encoded proteins, including proteins of the transcription and translation machinery and components of the photosynthetic apparatus. This Spinacia oleracea (Spinach) protein is Large ribosomal subunit protein uL13c (RPL13).